The primary structure comprises 106 residues: SH3 domain-binding glutamic acid-rich-like protein 2-B (106 aa).

Residues 61-67 (QGNPLPP) carry the SH3-binding motif.

This sequence belongs to the SH3BGR family.

The protein localises to the nucleus. In Xenopus laevis (African clawed frog), this protein is SH3 domain-binding glutamic acid-rich-like protein 2-B (sh3bgrl2-b).